Consider the following 328-residue polypeptide: Probable D,D-dipeptide transport ATP-binding protein DdpD (328 aa).

Positions 6-257 constitute an ABC transporter domain; the sequence is LDIQQLHLSF…PRHPYTIGLL (252 aa). An ATP-binding site is contributed by 42–49; it reads GESGSGKS.

Belongs to the ABC transporter superfamily. As to quaternary structure, the complex is composed of two ATP-binding proteins (DdpD and DdpF), two transmembrane proteins (DdpB and DdpC) and a solute-binding protein (DdpA).

The protein resides in the cell inner membrane. Its function is as follows. Part of the ABC transporter complex DdpABCDF, which is probably involved in D,D-dipeptide transport. Probably responsible for energy coupling to the transport system. The protein is Probable D,D-dipeptide transport ATP-binding protein DdpD of Escherichia coli (strain K12).